We begin with the raw amino-acid sequence, 163 residues long: Succinate dehydrogenase assembly factor 2-B, mitochondrial (163 aa).

Residues M1–L23 constitute a mitochondrion transit peptide.

This sequence belongs to the SDHAF2 family. In terms of assembly, interacts with the flavoprotein subunit within the SDH catalytic dimer.

It is found in the mitochondrion matrix. In terms of biological role, plays an essential role in the assembly of succinate dehydrogenase (SDH), an enzyme complex (also referred to as respiratory complex II) that is a component of both the tricarboxylic acid (TCA) cycle and the mitochondrial electron transport chain, and which couples the oxidation of succinate to fumarate with the reduction of ubiquinone (coenzyme Q) to ubiquinol. Required for flavinylation (covalent attachment of FAD) of the flavoprotein subunit of the SDH catalytic dimer. The chain is Succinate dehydrogenase assembly factor 2-B, mitochondrial from Drosophila ananassae (Fruit fly).